We begin with the raw amino-acid sequence, 433 residues long: Histidine--tRNA ligase (433 aa).

This sequence belongs to the class-II aminoacyl-tRNA synthetase family. In terms of assembly, homodimer.

Its subcellular location is the cytoplasm. It carries out the reaction tRNA(His) + L-histidine + ATP = L-histidyl-tRNA(His) + AMP + diphosphate + H(+). The chain is Histidine--tRNA ligase from Pseudothermotoga lettingae (strain ATCC BAA-301 / DSM 14385 / NBRC 107922 / TMO) (Thermotoga lettingae).